Here is a 558-residue protein sequence, read N- to C-terminus: CTP synthase (558 aa).

The tract at residues 1–267 (MAKFVFVTGG…CLEMLDVLNL (267 aa)) is amidoligase domain. S13 lines the CTP pocket. S13 contacts UTP. ATP is bound by residues 14-19 (SIGKGI) and D71. Mg(2+)-binding residues include D71 and E141. CTP-binding positions include 148–150 (DIE), 188–193 (KTKPTQ), and K224. Residues 188–193 (KTKPTQ) and K224 contribute to the UTP site. Positions 292–534 (KVALVGKYVQ…IEAAQLRLPA (243 aa)) constitute a Glutamine amidotransferase type-1 domain. Residue G354 participates in L-glutamine binding. C381 acts as the Nucleophile; for glutamine hydrolysis in catalysis. Residues 382 to 385 (LGMQ), E405, and R462 contribute to the L-glutamine site. Residues H507 and E509 contribute to the active site. Positions 536-558 (PDEALRRQSQTNISAQEQPSRIG) are disordered. Residues 542-558 (RQSQTNISAQEQPSRIG) are compositionally biased toward polar residues.

This sequence belongs to the CTP synthase family. In terms of assembly, homotetramer.

The catalysed reaction is UTP + L-glutamine + ATP + H2O = CTP + L-glutamate + ADP + phosphate + 2 H(+). The enzyme catalyses L-glutamine + H2O = L-glutamate + NH4(+). It carries out the reaction UTP + NH4(+) + ATP = CTP + ADP + phosphate + 2 H(+). The protein operates within pyrimidine metabolism; CTP biosynthesis via de novo pathway; CTP from UDP: step 2/2. With respect to regulation, allosterically activated by GTP, when glutamine is the substrate; GTP has no effect on the reaction when ammonia is the substrate. The allosteric effector GTP functions by stabilizing the protein conformation that binds the tetrahedral intermediate(s) formed during glutamine hydrolysis. Inhibited by the product CTP, via allosteric rather than competitive inhibition. Catalyzes the ATP-dependent amination of UTP to CTP with either L-glutamine or ammonia as the source of nitrogen. Regulates intracellular CTP levels through interactions with the four ribonucleotide triphosphates. The sequence is that of CTP synthase from Prochlorococcus marinus (strain MIT 9313).